A 96-amino-acid chain; its full sequence is Putative septation protein SpoVG (96 aa).

Belongs to the SpoVG family.

Functionally, could be involved in septation. In Clostridium kluyveri (strain ATCC 8527 / DSM 555 / NBRC 12016 / NCIMB 10680 / K1), this protein is Putative septation protein SpoVG.